A 595-amino-acid chain; its full sequence is Alpha-1,3-galactosidase B (595 aa).

The N-terminal stretch at 1-22 (MKTILLFALSLLLSLSVSDVCA) is a signal peptide. PbH1 repeat units lie at residues 432–454 (TPEVLFAGNTIRNNRARGTLFST), 455–477 (PKKTVVEDNLFDHTSGTAILLCG), and 488–541 (CRDV…VIED).

It belongs to the glycosyl hydrolase 110 family. B subfamily.

It carries out the reaction Hydrolysis of terminal, non-reducing branched (1-&gt;3)-alpha-D-galactosidic residues, producing free D-galactose.. The catalysed reaction is Hydrolysis of terminal, non-reducing linear (1-&gt;3)-alpha-D-galactosidic residues, producing free D-galactose.. The enzyme catalyses Hydrolysis of terminal, non-reducing alpha-D-galactose residues in alpha-D-galactosides, including galactose oligosaccharides, galactomannans and galactolipids.. In terms of biological role, alpha-galactosidase. Removes both branched alpha-1,3-linked galactose residues of blood group B antigens and linear alpha-1,3-linked galactose structures. The sequence is that of Alpha-1,3-galactosidase B (glaB) from Bacteroides fragilis (strain YCH46).